Reading from the N-terminus, the 410-residue chain is Divergent protein kinase domain 1C (410 aa).

Residues 1–19 lie on the Cytoplasmic side of the membrane; that stretch reads MARAAGERGRAARCGRWRR. Residues 18-19 carry the May mediate ER retention motif; sequence RR. A helical membrane pass occupies residues 20–40; the sequence is GALLAFAAWTAGWVLAAALLL. Topologically, residues 41-410 are lumenal; it reads RAHPSVLSER…TLKELQEAEK (370 aa).

It belongs to the DIPK family. Post-translationally, among the many cysteines in the lumenal domain, most are probably involved in disulfide bonds. As to expression, mainly expressed in the brain and eye, some expression in kidney and skeletal muscle.

The protein resides in the endoplasmic reticulum membrane. The protein is Divergent protein kinase domain 1C (Dipk1c) of Mus musculus (Mouse).